The primary structure comprises 233 residues: tRNA pseudouridine synthase B (233 aa).

Residue Asp-48 is the Nucleophile of the active site.

This sequence belongs to the pseudouridine synthase TruB family. Type 1 subfamily.

The enzyme catalyses uridine(55) in tRNA = pseudouridine(55) in tRNA. Its function is as follows. Responsible for synthesis of pseudouridine from uracil-55 in the psi GC loop of transfer RNAs. In Bacteroides fragilis (strain ATCC 25285 / DSM 2151 / CCUG 4856 / JCM 11019 / LMG 10263 / NCTC 9343 / Onslow / VPI 2553 / EN-2), this protein is tRNA pseudouridine synthase B.